The following is a 154-amino-acid chain: 6,7-dimethyl-8-ribityllumazine synthase (154 aa).

5-amino-6-(D-ribitylamino)uracil contacts are provided by residues phenylalanine 23, 57-59 (AFE), and 81-83 (AVI). 86-87 (AT) serves as a coordination point for (2S)-2-hydroxy-3-oxobutyl phosphate. Catalysis depends on histidine 89, which acts as the Proton donor. Phenylalanine 114 lines the 5-amino-6-(D-ribitylamino)uracil pocket. Arginine 128 contacts (2S)-2-hydroxy-3-oxobutyl phosphate.

The protein belongs to the DMRL synthase family.

It carries out the reaction (2S)-2-hydroxy-3-oxobutyl phosphate + 5-amino-6-(D-ribitylamino)uracil = 6,7-dimethyl-8-(1-D-ribityl)lumazine + phosphate + 2 H2O + H(+). It functions in the pathway cofactor biosynthesis; riboflavin biosynthesis; riboflavin from 2-hydroxy-3-oxobutyl phosphate and 5-amino-6-(D-ribitylamino)uracil: step 1/2. Its function is as follows. Catalyzes the formation of 6,7-dimethyl-8-ribityllumazine by condensation of 5-amino-6-(D-ribitylamino)uracil with 3,4-dihydroxy-2-butanone 4-phosphate. This is the penultimate step in the biosynthesis of riboflavin. This Syntrophus aciditrophicus (strain SB) protein is 6,7-dimethyl-8-ribityllumazine synthase.